We begin with the raw amino-acid sequence, 84 residues long: Putative membrane protein insertion efficiency factor (84 aa).

Belongs to the UPF0161 family.

It localises to the cell inner membrane. Its function is as follows. Could be involved in insertion of integral membrane proteins into the membrane. The protein is Putative membrane protein insertion efficiency factor of Shewanella pealeana (strain ATCC 700345 / ANG-SQ1).